Reading from the N-terminus, the 152-residue chain is SUZ RNA-binding domain-containing (152 aa).

At M1 the chain carries N-acetylmethionine. The disordered stretch occupies residues 30-152 (TQKESRKSKS…DGSQGFKQRR (123 aa)). Residues S37, S39, and S51 each carry the phosphoserine modification. The SUZ domain maps to 42–107 (KVPIVIQDDS…ARKRILGSAS (66 aa)). The segment covering 66–81 (PTSNGVVSSPNSTSRP) has biased composition (polar residues). Residues 89–100 (AQREAEYAEARK) show a composition bias toward basic and acidic residues. Phosphoserine is present on residues S105 and S107. In terms of domain architecture, SUZ-C spans 111–152 (EQEKPILDRPTRISQPEDSRQPNNVIRQPLGPDGSQGFKQRR). Over residues 113–130 (EKPILDRPTRISQPEDSR) the composition is skewed to basic and acidic residues.

This sequence belongs to the SZRD1 family.

This chain is SUZ RNA-binding domain-containing (SZRD1), found in Homo sapiens (Human).